The following is a 182-amino-acid chain: Protein GrpE (182 aa).

The disordered stretch occupies residues 1–37; the sequence is MSDSSKERKKKFTGMVNKQKSEDQQNNSKQADDLDEL.

This sequence belongs to the GrpE family. Homodimer.

It is found in the cytoplasm. Participates actively in the response to hyperosmotic and heat shock by preventing the aggregation of stress-denatured proteins, in association with DnaK and GrpE. It is the nucleotide exchange factor for DnaK and may function as a thermosensor. Unfolded proteins bind initially to DnaJ; upon interaction with the DnaJ-bound protein, DnaK hydrolyzes its bound ATP, resulting in the formation of a stable complex. GrpE releases ADP from DnaK; ATP binding to DnaK triggers the release of the substrate protein, thus completing the reaction cycle. Several rounds of ATP-dependent interactions between DnaJ, DnaK and GrpE are required for fully efficient folding. The sequence is that of Protein GrpE from Wolbachia sp. subsp. Brugia malayi (strain TRS).